We begin with the raw amino-acid sequence, 198 residues long: Protein uvp1 (198 aa).

Residues 1 to 140 (MIIGYARKST…SGLAAARARG (140 aa)) enclose the Resolvase/invertase-type recombinase catalytic domain. Ser-9 acts as the O-(5'-phospho-DNA)-serine intermediate in catalysis. The H-T-H motif DNA-binding region spans 168-187 (VGAVAKRFNVSRMTIYRYTT).

It belongs to the site-specific recombinase resolvase family.

In terms of biological role, cooperates with the mucAB genes in the DNA repair process. Could be a resolvase-invertase protein. The sequence is that of Protein uvp1 (uvp1) from Escherichia coli.